A 1393-amino-acid chain; its full sequence is ABC transporter G family member 3 (1393 aa).

Positions 1–14 (MEDKNNIELQEKAP) are enriched in basic and acidic residues. The disordered stretch occupies residues 1 to 68 (MEDKNNIELQ…IIYQNPTPAS (68 aa)). Positions 15 to 50 (DNYNNNNNNNNNNNNNNNNNNNNNNNNNNNNNNDIN) are enriched in low complexity. One can recognise an ABC transporter 1 domain in the interval 100–353 (VSANNISYYI…YFSSIGLAPL (254 aa)). Residue 144–151 (GIPGAGKS) participates in ATP binding. The ABC transmembrane type-2 1 domain occupies 473 to 698 (MQYAVRFFQA…SYADGGYQGN (226 aa)). Helical transmembrane passes span 479–499 (FFQA…MGFT), 509–529 (LVYF…EEFF), 558–578 (IPIS…IAGF), 585–605 (FIVF…IFQV), 615–635 (LASL…GYMI), 640–660 (IPGW…IDMV), and 724–744 (VDIV…FLGV). In terms of domain architecture, ABC transporter 2 spans 783 to 1035 (MTFQNLNYVV…VIQHFTSAGY (253 aa)). Residue 828–835 (GPSGAGKS) participates in ATP binding. Residues 1121-1388 (QTILLRFLRS…FLGYLALRFI (268 aa)) form the ABC transmembrane type-2 2 domain. 6 helical membrane-spanning segments follow: residues 1122 to 1142 (TILL…TLFL), 1157 to 1177 (LVFL…PTIV), 1206 to 1226 (LPMM…LTGL), 1235 to 1255 (FFFS…LATL), 1265 to 1285 (IAIL…GFFI), and 1364 to 1384 (FYNL…GYLA).

This sequence belongs to the ABC transporter superfamily. ABCG family. PDR (TC 3.A.1.205) subfamily.

It is found in the membrane. The chain is ABC transporter G family member 3 (abcG3) from Dictyostelium discoideum (Social amoeba).